We begin with the raw amino-acid sequence, 490 residues long: Cytochrome P450 2W1 (490 aa).

The N-terminal stretch at M1–A22 is a signal peptide. A glycan (N-linked (GlcNAc...) asparagine) is linked at N177. C433 is a binding site for heme.

Belongs to the cytochrome P450 family. Requires heme as cofactor. Very low levels are detected in fetal and adult tissues. Highly expressed in several tumor samples, in particular colon and adrenal tumors.

It is found in the endoplasmic reticulum lumen. The protein localises to the cell membrane. It localises to the microsome membrane. It carries out the reaction all-trans-retinoate + reduced [NADPH--hemoprotein reductase] + O2 = all-trans-4-hydroxyretinoate + oxidized [NADPH--hemoprotein reductase] + H2O + H(+). It catalyses the reaction 1-(9Z-octadecenoyl)-sn-glycero-3-phosphocholine + reduced [NADPH--hemoprotein reductase] + O2 = 1-[8-hydroxy-(9Z)-octadecenoyl]-sn-glycero-3-phosphocholine + oxidized [NADPH--hemoprotein reductase] + H2O + H(+). The enzyme catalyses 1-(9Z-octadecenoyl)-sn-glycero-3-phosphocholine + reduced [NADPH--hemoprotein reductase] + O2 = 1-[11-hydroxy-(9Z)-octadecenoyl]-sn-glycero-3-phosphocholine + oxidized [NADPH--hemoprotein reductase] + H2O + H(+). The catalysed reaction is 1-(9Z-octadecenoyl)-sn-glycero-3-phosphocholine + reduced [NADPH--hemoprotein reductase] + O2 = 1-[(9S,10R)-epoxy-octadecanoyl]-sn-glycero-3-phosphocholine + oxidized [NADPH--hemoprotein reductase] + H2O + H(+). It carries out the reaction 1-(9Z-octadecenoyl)-sn-glycero-3-phosphocholine + reduced [NADPH--hemoprotein reductase] + O2 = 1-[(9R,10S)-epoxy-octadecanoyl]-sn-glycero-3-phosphocholine + oxidized [NADPH--hemoprotein reductase] + H2O + H(+). Functionally, a cytochrome P450 monooxygenase that may play a role in retinoid and phospholipid metabolism. Catalyzes the hydroxylation of saturated carbon hydrogen bonds. Hydroxylates all trans-retinoic acid (atRA) to 4-hydroxyretinoate and may regulate atRA clearance. Other retinoids such as all-trans retinol and all-trans retinal are potential endogenous substrates. Catalyzes both epoxidation of double bonds and hydroxylation of carbon hydrogen bonds of the fatty acyl chain of 1-acylphospholipids/2-lysophospholipids. Can metabolize various lysophospholipids classes including lysophosphatidylcholines (LPCs), lysophosphatidylinositols (LPIs), lysophosphatidylserines (LPSs), lysophosphatidylglycerols (LPGs), lysophosphatidylethanolamines (LPEs) and lysophosphatidic acids (LPAs). Has low or no activity toward 2-acylphospholipids/1-lysophospholipids, diacylphospholipids and free fatty acids. May play a role in tumorigenesis by activating procarcinogens such as aflatoxin B1, polycyclic aromatic hydrocarbon dihydrodiols and aromatic amines. Mechanistically, uses molecular oxygen inserting one oxygen atom into a substrate, and reducing the second into a water molecule, with two electrons provided by NADPH via cytochrome P450 reductase (CPR; NADPH-ferrihemoprotein reductase). This Homo sapiens (Human) protein is Cytochrome P450 2W1.